A 115-amino-acid polypeptide reads, in one-letter code: UPF0102 protein Swol_1475 (115 aa).

Belongs to the UPF0102 family.

This Syntrophomonas wolfei subsp. wolfei (strain DSM 2245B / Goettingen) protein is UPF0102 protein Swol_1475.